The following is an 891-amino-acid chain: Receptor-like protein 50 (891 aa).

The N-terminal stretch at 1–22 (MITIIWSLCLIFCLSNSILVIA) is a signal peptide. Topologically, residues 23–849 (KDLCLPDQRD…KEEKDKGLSW (827 aa)) are extracellular. Asn-62 and Asn-98 each carry an N-linked (GlcNAc...) asparagine glycan. 7 LRR repeats span residues 105 to 130 (QHLQ…NFKY), 132 to 152 (RVLN…LRSL), 153 to 176 (SYLT…SMGN), 177 to 201 (LKHL…LGNL), 203 to 225 (YLTD…MGNL), 226 to 249 (KSLR…LGSL), and 250 to 272 (SNLT…SMSS). An N-linked (GlcNAc...) asparagine glycan is attached at Asn-200. N-linked (GlcNAc...) asparagine glycosylation is found at Asn-251, Asn-285, and Asn-306. LRR repeat units follow at residues 286 to 309 (LSSL…NMSS), 310 to 334 (LSKL…LFML), 336 to 358 (SLIK…NISS), and 359 to 383 (PSNL…ILKL). N-linked (GlcNAc...) asparagine glycosylation occurs at Asn-355. Residues 384–407 (VGLSALSLSFWDTGGIVDFSIFLQ) form an LRR 12; degenerate repeat. LRR repeat units lie at residues 408-436 (LKSL…MMHL), 438-453 (LSSC…LENQ), 454-477 (TSLY…LWRL), 478-504 (PTLR…IYSF), 506-519 (ASDN…PRAV), 520-544 (CEIG…EISN), 545-568 (KTLS…SLHG), 570-591 (LRSL…LINC), 593-614 (YLQF…WLKS), 615-641 (LPNL…SLSF), 642-665 (SKLR…YFVG), 712-736 (FEIY…IGIL), 737-760 (KELI…LSNL), 761-784 (SNLQ…LGEL), and 786-809 (FLAR…QIQS). Residues Asn-422, Asn-442, and Asn-452 are each glycosylated (N-linked (GlcNAc...) asparagine). N-linked (GlcNAc...) asparagine glycosylation is found at Asn-531, Asn-544, Asn-554, Asn-590, and Asn-605. 2 N-linked (GlcNAc...) asparagine glycosylation sites follow: Asn-743 and Asn-759. N-linked (GlcNAc...) asparagine glycosylation is found at Asn-791 and Asn-811. A helical membrane pass occupies residues 850–870 (VAAAIGYVPGLFCGLAIGHIL). Residues 871 to 891 (TSYKRDWFMRIFSCFSSPLKK) lie on the Cytoplasmic side of the membrane.

Belongs to the RLP family.

The protein resides in the cell membrane. This is Receptor-like protein 50 from Arabidopsis thaliana (Mouse-ear cress).